The primary structure comprises 25 residues: Cysteine-rich venom protein 25 (25 aa).

A disordered region spans residues 1-25 (NVDFNSESTRRKKKQKEIVDLXNSL).

The protein belongs to the CRISP family. Post-translationally, contains 8 disulfide bonds. As to expression, expressed by the venom gland.

Its subcellular location is the secreted. In Naja haje haje (Egyptian cobra), this protein is Cysteine-rich venom protein 25.